Reading from the N-terminus, the 352-residue chain is [Citrate [pro-3S]-lyase] ligase (352 aa).

In terms of domain architecture, N-acetyltransferase spans 1–128 (MFGNDIFTRV…VMVLMENSAT (128 aa)).

It catalyses the reaction holo-[citrate lyase ACP] + acetate + ATP = acetyl-[citrate lyase ACP] + AMP + diphosphate. Its function is as follows. Acetylation of prosthetic group (2-(5''-phosphoribosyl)-3'-dephosphocoenzyme-A) of the gamma subunit of citrate lyase. This chain is [Citrate [pro-3S]-lyase] ligase (citC), found in Escherichia coli (strain K12).